A 244-amino-acid polypeptide reads, in one-letter code: Capsid protein (244 aa).

A Bipartite nuclear localization signal motif is present at residues 1–24 (MSTSKRKRGDDANWSKRVTKKKPS). Positions 1 to 39 (MSTSKRKRGDDANWSKRVTKKKPSSAGLKRAGSKADRPS) are disordered.

It belongs to the geminiviridae capsid protein family. Homomultimer. Interacts with the movement protein. Binds to single-stranded and double-stranded viral DNA.

Its subcellular location is the virion. It is found in the host nucleus. Its function is as follows. Encapsidates the viral genome into characteristic twinned ('geminate') particles. Binds the genomic viral ssDNA and shuttles it into and out of the cell nucleus. Plays a role in protection of the genome from degradation, virus acquisition and transmission by insect vectors, infectivity, and systemic movement. The CP of monopartite geminiviruses is absolutely essential for virus movement. In Maize streak virus genotype A (isolate Kenya) (MSV), this protein is Capsid protein.